Consider the following 248-residue polypeptide: 3-deoxy-manno-octulosonate cytidylyltransferase (248 aa).

It belongs to the KdsB family.

The protein resides in the cytoplasm. The catalysed reaction is 3-deoxy-alpha-D-manno-oct-2-ulosonate + CTP = CMP-3-deoxy-beta-D-manno-octulosonate + diphosphate. It participates in nucleotide-sugar biosynthesis; CMP-3-deoxy-D-manno-octulosonate biosynthesis; CMP-3-deoxy-D-manno-octulosonate from 3-deoxy-D-manno-octulosonate and CTP: step 1/1. The protein operates within bacterial outer membrane biogenesis; lipopolysaccharide biosynthesis. Functionally, activates KDO (a required 8-carbon sugar) for incorporation into bacterial lipopolysaccharide in Gram-negative bacteria. The chain is 3-deoxy-manno-octulosonate cytidylyltransferase from Escherichia coli (strain K12 / MC4100 / BW2952).